The chain runs to 257 residues: Large ribosomal subunit protein uL2 (257 aa).

Positions V207–A231 are disordered.

The protein belongs to the universal ribosomal protein uL2 family. As to quaternary structure, component of the large ribosomal subunit.

The protein localises to the cytoplasm. Component of the large ribosomal subunit. The ribosome is a large ribonucleoprotein complex responsible for the synthesis of proteins in the cell. The polypeptide is Large ribosomal subunit protein uL2 (rpl8) (Xenopus laevis (African clawed frog)).